A 333-amino-acid polypeptide reads, in one-letter code: Phosphate acyltransferase (333 aa).

The protein belongs to the PlsX family. Homodimer. Probably interacts with PlsY.

It is found in the cytoplasm. It carries out the reaction a fatty acyl-[ACP] + phosphate = an acyl phosphate + holo-[ACP]. It participates in lipid metabolism; phospholipid metabolism. Functionally, catalyzes the reversible formation of acyl-phosphate (acyl-PO(4)) from acyl-[acyl-carrier-protein] (acyl-ACP). This enzyme utilizes acyl-ACP as fatty acyl donor, but not acyl-CoA. The polypeptide is Phosphate acyltransferase (Lactobacillus acidophilus (strain ATCC 700396 / NCK56 / N2 / NCFM)).